Reading from the N-terminus, the 418-residue chain is Tektin-1 (418 aa).

4 coiled-coil regions span residues 20–107, 134–177, 266–308, and 332–383; these read NKSQ…SYKE, QELQ…DLKD, NGLK…QQEG, and VAQY…ENTI.

This sequence belongs to the tektin family. As to quaternary structure, microtubule inner protein component of sperm flagellar doublet microtubules. Post-translationally, ubiquitinated, leading to its degradation. Deubiquitinated by USP16, promoting its stability. In terms of tissue distribution, predominantly expressed in testis.

The protein localises to the cytoplasm. It localises to the cytoskeleton. Its subcellular location is the cilium axoneme. It is found in the flagellum axoneme. Functionally, microtubule inner protein (MIP) part of the dynein-decorated doublet microtubules (DMTs) in cilia and flagellar axoneme. Forms filamentous polymers in the walls of ciliary and flagellar microtubules. This chain is Tektin-1 (Tekt1), found in Rattus norvegicus (Rat).